The following is a 240-amino-acid chain: 3-dehydroquinate dehydratase (240 aa).

Residues Ser-15, Glu-42–Arg-44, and Arg-73 contribute to the 3-dehydroquinate site. The active-site Proton donor/acceptor is His-132. Residue Lys-160 is the Schiff-base intermediate with substrate of the active site. Positions 202, 221, and 225 each coordinate 3-dehydroquinate.

The protein belongs to the type-I 3-dehydroquinase family. As to quaternary structure, homodimer.

The catalysed reaction is 3-dehydroquinate = 3-dehydroshikimate + H2O. Its pathway is metabolic intermediate biosynthesis; chorismate biosynthesis; chorismate from D-erythrose 4-phosphate and phosphoenolpyruvate: step 3/7. Its function is as follows. Involved in the third step of the chorismate pathway, which leads to the biosynthesis of aromatic amino acids. Catalyzes the cis-dehydration of 3-dehydroquinate (DHQ) and introduces the first double bond of the aromatic ring to yield 3-dehydroshikimate. The sequence is that of 3-dehydroquinate dehydratase from Latilactobacillus sakei subsp. sakei (strain 23K) (Lactobacillus sakei subsp. sakei).